The sequence spans 561 residues: Methyl-accepting chemotaxis protein CtpM (561 aa).

Residues 1–11 (MMRLTLKSKVL) are Cytoplasmic-facing. Residues 12 to 32 (LLAMVPVLLFALVLSGGAVLI) traverse the membrane as a helical segment. At 33 to 205 (LKKQADAEVK…KQDIDERIGT (173 aa)) the chain is on the periplasmic side. A helical transmembrane segment spans residues 206 to 226 (LIASIVGIAGVLLVVLLVIGL). At 227 to 561 (AVANAMLRPL…LGRLVGQFRI (335 aa)) the chain is on the cytoplasmic side. The region spanning 230 to 284 (NAMLRPLHQIRQNLDDIAAGEGDLTRRLPVTSYDELGELAGSFNRFVEKIHGLVR) is the HAMP domain. One can recognise a Methyl-accepting transducer domain in the interval 289–525 (MTGDLKQLVE…EINRSVHQIA (237 aa)). A disordered region spans residues 333–357 (HEVAQSAQRAAEAAQQTDHEGQAAK). Residues 336-348 (AQSAQRAAEAAQQ) are compositionally biased toward low complexity.

It belongs to the methyl-accepting chemotaxis (MCP) protein family. As to quaternary structure, homodimer. The ligand-binding domain (LBD) is dimeric in the presence and the absence of ligands.

Its subcellular location is the cell inner membrane. Its function is as follows. Chemotactic-signal transducers respond to changes in the concentration of attractants and repellents in the environment, transduce a signal from the outside to the inside of the cell, and facilitate sensory adaptation through the variation of the level of methylation. Directly recognizes five C4-dicarboxylic acids: L-malic, citramalic, citraconic, bromosuccinic and methylsuccinic acids. Three of the identified ligands act as chemoattractants (L-malic, D,L-bromosuccinic and L-citramalic acids) whereas two of them (L-methylsuccinic and citraconic acids) behave as antagonists by inhibiting the downstream chemotaxis signaling cascade. Antagonists compete with chemoattractants, thereby decreasing the affinity for chemoattractants and the subsequent chemotactic response. Acts through the che chemosensory pathway. In Pseudomonas aeruginosa (strain ATCC 15692 / DSM 22644 / CIP 104116 / JCM 14847 / LMG 12228 / 1C / PRS 101 / PAO1), this protein is Methyl-accepting chemotaxis protein CtpM.